Reading from the N-terminus, the 590-residue chain is Aspartate--tRNA(Asp/Asn) ligase (590 aa).

An L-aspartate-binding site is contributed by Glu-170. The aspartate stretch occupies residues Gln-194–Lys-197. Residue Arg-216 coordinates L-aspartate. ATP-binding positions include Arg-216–Glu-218 and Gln-225. Position 448 (His-448) interacts with L-aspartate. ATP is bound at residue Glu-482. L-aspartate is bound at residue Arg-489. ATP is bound at residue Gly-534–Arg-537. The segment at Ser-557–Glu-590 is disordered. Residues Gln-575 to Glu-590 are compositionally biased toward basic and acidic residues.

Belongs to the class-II aminoacyl-tRNA synthetase family. Type 1 subfamily. As to quaternary structure, homodimer.

The protein resides in the cytoplasm. The catalysed reaction is tRNA(Asx) + L-aspartate + ATP = L-aspartyl-tRNA(Asx) + AMP + diphosphate. Aspartyl-tRNA synthetase with relaxed tRNA specificity since it is able to aspartylate not only its cognate tRNA(Asp) but also tRNA(Asn). Reaction proceeds in two steps: L-aspartate is first activated by ATP to form Asp-AMP and then transferred to the acceptor end of tRNA(Asp/Asn). The sequence is that of Aspartate--tRNA(Asp/Asn) ligase from Mycobacterium sp. (strain JLS).